We begin with the raw amino-acid sequence, 638 residues long: RAF proto-oncogene serine/threonine-protein kinase (638 aa).

Ser-43 carries the post-translational modification Phosphoserine. Residues 56-130 enclose the RBD domain; it reads STMRVYLPNK…VGAELQVDFL (75 aa). Residues 137-183 form a Phorbol-ester/DAG-type zinc finger; the sequence is THNFVRKTFLKLAFCDICQKFLLNAFRCQTCGYKFHEHCSTKVPTMC. His-138, Cys-151, Cys-154, Cys-164, Cys-167, His-172, Cys-175, and Cys-183 together coordinate Zn(2+). The residue at position 257 (Ser-257) is a Phosphoserine. Thr-266 carries the phosphothreonine; by autocatalysis modification. The interval 279-323 is disordered; that stretch reads LRSHSESGSPNNLSPTGWSNAKAPAPTHREKAASSTGQEKNKIRA. Polar residues predominate over residues 284–297; sequence ESGSPNNLSPTGWS. Position 329 is a phosphoserine (Ser-329). The region spanning 340-600 is the Protein kinase domain; the sequence is VMLSSRIGSG…PQILSSIELL (261 aa). ATP contacts are provided by residues 346–354 and Lys-366; that span reads IGSGSFGTV. Asp-459 (proton acceptor) is an active-site residue. Ser-490 is modified (phosphoserine).

Belongs to the protein kinase superfamily. TKL Ser/Thr protein kinase family. RAF subfamily. Zn(2+) serves as cofactor. Post-translationally, phosphorylation at Ser-257 inactivates kinase activity. Dephosphorylation of Ser-257 by a complex containing protein phosphatase 1 relieves inactivation, leading to stimulate RAF1 activity.

Its subcellular location is the cytoplasm. It localises to the cell membrane. It catalyses the reaction L-seryl-[protein] + ATP = O-phospho-L-seryl-[protein] + ADP + H(+). It carries out the reaction L-threonyl-[protein] + ATP = O-phospho-L-threonyl-[protein] + ADP + H(+). Serine/threonine-protein kinase that acts as a regulatory link between the membrane-associated Ras GTPases and the MAPK/ERK cascade, and this critical regulatory link functions as a switch determining cell fate decisions. RAF1 activation initiates a mitogen-activated protein kinase (MAPK) cascade that comprises a sequential phosphorylation of the dual-specific MAPK kinases (MAP2K1/MEK1 and MAP2K2/MEK2) and the extracellular signal-regulated kinases (MAPK3/ERK1 and MAPK1/ERK2). This chain is RAF proto-oncogene serine/threonine-protein kinase (raf1), found in Xenopus laevis (African clawed frog).